A 398-amino-acid polypeptide reads, in one-letter code: MPHFLAKLDCKPLEYPIISGDFCFHKEFSSLKHPTKSCVYASFKDHIFLLQKIRRANDFLIKSEKATPLKREILKQALRIYAQSFEVILHNLQENSKHASGKKALDLEDFEDFIKENQAPILMEIGFGSGRHLMELAKNNPTKTCLGIEIYTPSIAQVLKQIELLDLKNLHVLQGDGRLVLESIPHHKCEKIFVHFPVPWNDKKHRRVLSERFLDEALRVLEPNGFLELRTDDTLYFEDSLKLALKHFKSEIEIKKNAQIPVVSKYEARWNKLKKDIYDLRIYSLESNETPFNNHAFDFSFDTITLNQKSVGMILKTPKIIKEGYFVHVCNIYENKGDFLVELSMGDFDWPMRLFVLSVKNQVFYLNKSPLKTLNNHKAHLLLQNILKEFDEYNHCSE.

S-adenosyl-L-methionine is bound by residues glutamate 124, glutamate 149, and aspartate 176. Aspartate 232 is a substrate binding site.

The protein belongs to the class I-like SAM-binding methyltransferase superfamily. TrmB family.

The enzyme catalyses guanosine(46) in tRNA + S-adenosyl-L-methionine = N(7)-methylguanosine(46) in tRNA + S-adenosyl-L-homocysteine. The protein operates within tRNA modification; N(7)-methylguanine-tRNA biosynthesis. Catalyzes the formation of N(7)-methylguanine at position 46 (m7G46) in tRNA. In Helicobacter acinonychis (strain Sheeba), this protein is tRNA (guanine-N(7)-)-methyltransferase.